Consider the following 125-residue polypeptide: Methylglyoxal synthase (125 aa).

One can recognise an MGS-like domain in the interval 1-125 (MTQRLRIALI…TAEKLVRALD (125 aa)). Substrate contacts are provided by residues histidine 12, lysine 16, 38–41 (TGTT), and 59–60 (SG). Residue aspartate 65 is the Proton donor/acceptor of the active site. Histidine 92 contributes to the substrate binding site.

This sequence belongs to the methylglyoxal synthase family.

The catalysed reaction is dihydroxyacetone phosphate = methylglyoxal + phosphate. Its function is as follows. Catalyzes the formation of methylglyoxal from dihydroxyacetone phosphate. This Brucella abortus (strain S19) protein is Methylglyoxal synthase.